The primary structure comprises 417 residues: Serine hydroxymethyltransferase (417 aa).

Residues Leu-121 and 125-127 each bind (6S)-5,6,7,8-tetrahydrofolate; that span reads GHL. The residue at position 229 (Lys-229) is an N6-(pyridoxal phosphate)lysine. Residue 355–357 participates in (6S)-5,6,7,8-tetrahydrofolate binding; the sequence is SPF.

It belongs to the SHMT family. As to quaternary structure, homodimer. The cofactor is pyridoxal 5'-phosphate.

It localises to the cytoplasm. The enzyme catalyses (6R)-5,10-methylene-5,6,7,8-tetrahydrofolate + glycine + H2O = (6S)-5,6,7,8-tetrahydrofolate + L-serine. It functions in the pathway one-carbon metabolism; tetrahydrofolate interconversion. Its pathway is amino-acid biosynthesis; glycine biosynthesis; glycine from L-serine: step 1/1. Catalyzes the reversible interconversion of serine and glycine with tetrahydrofolate (THF) serving as the one-carbon carrier. This reaction serves as the major source of one-carbon groups required for the biosynthesis of purines, thymidylate, methionine, and other important biomolecules. Also exhibits THF-independent aldolase activity toward beta-hydroxyamino acids, producing glycine and aldehydes, via a retro-aldol mechanism. In Xanthomonas campestris pv. campestris (strain 8004), this protein is Serine hydroxymethyltransferase.